A 315-amino-acid polypeptide reads, in one-letter code: Ribosomal RNA small subunit methyltransferase H (315 aa).

S-adenosyl-L-methionine-binding positions include 36 to 38, Asp56, Phe81, Asp103, and Gln110; that span reads GGH.

The protein belongs to the methyltransferase superfamily. RsmH family.

Its subcellular location is the cytoplasm. The enzyme catalyses cytidine(1402) in 16S rRNA + S-adenosyl-L-methionine = N(4)-methylcytidine(1402) in 16S rRNA + S-adenosyl-L-homocysteine + H(+). Its function is as follows. Specifically methylates the N4 position of cytidine in position 1402 (C1402) of 16S rRNA. This Idiomarina loihiensis (strain ATCC BAA-735 / DSM 15497 / L2-TR) protein is Ribosomal RNA small subunit methyltransferase H.